The sequence spans 267 residues: Undecaprenyl-diphosphatase (267 aa).

7 helical membrane-spanning segments follow: residues 4-24 (LYAL…ISST), 41-61 (FWKS…IFVF), 69-89 (LDIW…GLFV), 96-116 (LFNG…FILI), 173-193 (AAEF…AYSI), 207-227 (IPLG…IKFF), and 239-259 (FGIY…SGIL).

This sequence belongs to the UppP family.

It localises to the cell inner membrane. It catalyses the reaction di-trans,octa-cis-undecaprenyl diphosphate + H2O = di-trans,octa-cis-undecaprenyl phosphate + phosphate + H(+). Its function is as follows. Catalyzes the dephosphorylation of undecaprenyl diphosphate (UPP). Confers resistance to bacitracin. This is Undecaprenyl-diphosphatase from Campylobacter jejuni subsp. jejuni serotype O:23/36 (strain 81-176).